The chain runs to 374 residues: Queuine tRNA-ribosyltransferase (374 aa).

Asp89 functions as the Proton acceptor in the catalytic mechanism. Substrate is bound by residues 89–93 (DSGGF), Asp143, Gln187, and Gly214. The segment at 245 to 251 (GVGKPED) is RNA binding. The active-site Nucleophile is Asp264. The RNA binding; important for wobble base 34 recognition stretch occupies residues 269 to 273 (TRNAR). Residues Cys302, Cys304, Cys307, and His333 each contribute to the Zn(2+) site.

This sequence belongs to the queuine tRNA-ribosyltransferase family. Homodimer. Within each dimer, one monomer is responsible for RNA recognition and catalysis, while the other monomer binds to the replacement base PreQ1. Zn(2+) serves as cofactor.

The catalysed reaction is 7-aminomethyl-7-carbaguanine + guanosine(34) in tRNA = 7-aminomethyl-7-carbaguanosine(34) in tRNA + guanine. Its pathway is tRNA modification; tRNA-queuosine biosynthesis. In terms of biological role, catalyzes the base-exchange of a guanine (G) residue with the queuine precursor 7-aminomethyl-7-deazaguanine (PreQ1) at position 34 (anticodon wobble position) in tRNAs with GU(N) anticodons (tRNA-Asp, -Asn, -His and -Tyr). Catalysis occurs through a double-displacement mechanism. The nucleophile active site attacks the C1' of nucleotide 34 to detach the guanine base from the RNA, forming a covalent enzyme-RNA intermediate. The proton acceptor active site deprotonates the incoming PreQ1, allowing a nucleophilic attack on the C1' of the ribose to form the product. After dissociation, two additional enzymatic reactions on the tRNA convert PreQ1 to queuine (Q), resulting in the hypermodified nucleoside queuosine (7-(((4,5-cis-dihydroxy-2-cyclopenten-1-yl)amino)methyl)-7-deazaguanosine). The polypeptide is Queuine tRNA-ribosyltransferase (Shewanella baltica (strain OS185)).